We begin with the raw amino-acid sequence, 154 residues long: Myoglobin (154 aa).

Residues 2–148 (GLSDGEWTLV…FRNDMAAQYK (147 aa)) enclose the Globin domain. Serine 4 is subject to Phosphoserine. Residue histidine 65 coordinates nitrite. Position 65 (histidine 65) interacts with O2. A Phosphothreonine modification is found at threonine 68. Histidine 94 is a heme b binding site.

This sequence belongs to the globin family. As to quaternary structure, monomeric.

It localises to the cytoplasm. Its subcellular location is the sarcoplasm. The catalysed reaction is Fe(III)-heme b-[protein] + nitric oxide + H2O = Fe(II)-heme b-[protein] + nitrite + 2 H(+). It carries out the reaction H2O2 + AH2 = A + 2 H2O. Its function is as follows. Monomeric heme protein which primary function is to store oxygen and facilitate its diffusion within muscle tissues. Reversibly binds oxygen through a pentacoordinated heme iron and enables its timely and efficient release as needed during periods of heightened demand. Depending on the oxidative conditions of tissues and cells, and in addition to its ability to bind oxygen, it also has a nitrite reductase activity whereby it regulates the production of bioactive nitric oxide. Under stress conditions, like hypoxia and anoxia, it also protects cells against reactive oxygen species thanks to its pseudoperoxidase activity. This Capra hircus (Goat) protein is Myoglobin.